The primary structure comprises 175 residues: Ribosome maturation factor RimM (175 aa).

The region spanning 96–172 is the PRC barrel domain; it reads PDTYYDHQLE…LIEIDPPDGL (77 aa).

Belongs to the RimM family. In terms of assembly, binds ribosomal protein uS19.

It localises to the cytoplasm. Functionally, an accessory protein needed during the final step in the assembly of 30S ribosomal subunit, possibly for assembly of the head region. Essential for efficient processing of 16S rRNA. May be needed both before and after RbfA during the maturation of 16S rRNA. It has affinity for free ribosomal 30S subunits but not for 70S ribosomes. In Mycolicibacterium paratuberculosis (strain ATCC BAA-968 / K-10) (Mycobacterium paratuberculosis), this protein is Ribosome maturation factor RimM.